We begin with the raw amino-acid sequence, 601 residues long: Sodium-dependent phosphate transport protein 2C (601 aa).

Residues 1–75 are Cytoplasmic-facing; the sequence is MPNSLAGGQV…RRVVSSFLKA (75 aa). Phosphoserine is present on serine 4. A helical transmembrane segment spans residues 76-96; it reads CGLLGSLYFFICSLDILSSAF. The Extracellular segment spans residues 97 to 110; it reads QLLGSKMAGDIFKD. Residues 111 to 131 traverse the membrane as a helical segment; sequence NVVLSNPVAGLVIGVLVTVLV. Topologically, residues 132 to 187 are cytoplasmic; that stretch reads QSSSTSSSIVVSMVASKLLTVQVSVPIIMGVNVGTSITSTLVSMAQSGDRDEFQRA. Residues 188–208 traverse the membrane as a helical segment; the sequence is FSGSAVHGIFNWLTVLVLLPL. Residues 209–324 lie on the Extracellular side of the membrane; it reads ESATAALERL…FAGSKLTDLA (116 aa). N-linked (GlcNAc...) asparagine glycosylation is found at asparagine 264, asparagine 267, and asparagine 299. Cysteine 275 and cysteine 311 are oxidised to a cystine. A helical transmembrane segment spans residues 325-345; the sequence is VGFILLAGSLLVLCVCLVLIV. The Cytoplasmic segment spans residues 346-369; the sequence is KLLNSVLKGRIAQAVKTVINADFP. A helical membrane pass occupies residues 370 to 390; that stretch reads FPFGWLSGYLAILVGAGLTFL. The Extracellular segment spans residues 391–441; that stretch reads LQSSSVFTAAIVPLMGVGVIDLERAYPLFLGSNIGTTTTALLAALASPADM. Residues 442-462 form a helical membrane-spanning segment; it reads LIFAVQVALIHFFFNLAGILL. At 463–487 the chain is on the cytoplasmic side; it reads WYLVPVLRLPIPLAKRFGNLTAQYR. The chain crosses the membrane as a helical span at residues 488-508; it reads WVAIVYLLLTFLLLPLAAFGL. Topologically, residues 509 to 512 are extracellular; it reads SLAG. The helical transmembrane segment at 513–533 threads the bilayer; it reads GTVLAAVGGPLVGLVLLIILV. The Cytoplasmic segment spans residues 534–601; the sequence is NVLQQHRPSW…NPQVIASQQL (68 aa).

This sequence belongs to the SLC34A transporter family. In terms of tissue distribution, expressed only in the kidney.

The protein resides in the apical cell membrane. The catalysed reaction is 2 Na(+)(out) + phosphate(out) = 2 Na(+)(in) + phosphate(in). Functionally, involved in actively transporting phosphate into cells via Na(+) cotransport in the renal brush border membrane. The cotransport has a Na(+):Pi stoichiometry of 2:1 and is electroneutral. This is Sodium-dependent phosphate transport protein 2C (Slc34a3) from Mus musculus (Mouse).